Here is a 291-residue protein sequence, read N- to C-terminus: Protease HtpX (291 aa).

2 helical membrane passes run Ile4–Leu24 and Gly36–Ile56. His142 is a binding site for Zn(2+). The active site involves Glu143. A Zn(2+)-binding site is contributed by His146. Helical transmembrane passes span Gly150 to Ala170 and Phe193 to Trp213. Glu219 contributes to the Zn(2+) binding site.

The protein belongs to the peptidase M48B family. Zn(2+) is required as a cofactor.

It is found in the cell inner membrane. In Pseudomonas aeruginosa (strain LESB58), this protein is Protease HtpX.